Consider the following 331-residue polypeptide: PTS-dependent dihydroxyacetone kinase 2, dihydroxyacetone-binding subunit DhaK (331 aa).

A DhaK domain is found at aspartate 7–phenylalanine 328. Dihydroxyacetone contacts are provided by residues glycine 55–histidine 58 and aspartate 111. The active-site Proton acceptor is histidine 58. Residue histidine 218 is the Tele-hemiaminal-histidine intermediate of the active site.

In terms of assembly, homodimer. The dihydroxyacetone kinase complex is composed of a homodimer of DhaM, a homodimer of DhaK and the subunit DhaL.

The protein resides in the cytoplasm. The enzyme catalyses dihydroxyacetone + phosphoenolpyruvate = dihydroxyacetone phosphate + pyruvate. The protein operates within polyol metabolism; glycerol degradation. In terms of biological role, dihydroxyacetone binding subunit of the dihydroxyacetone kinase, which is responsible for the phosphoenolpyruvate (PEP)-dependent phosphorylation of dihydroxyacetone via a phosphoryl group transfer from DhaL-ATP. The protein is PTS-dependent dihydroxyacetone kinase 2, dihydroxyacetone-binding subunit DhaK of Listeria innocua serovar 6a (strain ATCC BAA-680 / CLIP 11262).